Consider the following 384-residue polypeptide: Anhydro-N-acetylmuramic acid kinase (384 aa).

9-16 (GTSADGVD) lines the ATP pocket.

This sequence belongs to the anhydro-N-acetylmuramic acid kinase family.

It catalyses the reaction 1,6-anhydro-N-acetyl-beta-muramate + ATP + H2O = N-acetyl-D-muramate 6-phosphate + ADP + H(+). It participates in amino-sugar metabolism; 1,6-anhydro-N-acetylmuramate degradation. The protein operates within cell wall biogenesis; peptidoglycan recycling. Catalyzes the specific phosphorylation of 1,6-anhydro-N-acetylmuramic acid (anhMurNAc) with the simultaneous cleavage of the 1,6-anhydro ring, generating MurNAc-6-P. Is required for the utilization of anhMurNAc either imported from the medium or derived from its own cell wall murein, and thus plays a role in cell wall recycling. This chain is Anhydro-N-acetylmuramic acid kinase, found in Synechococcus sp. (strain CC9311).